Consider the following 119-residue polypeptide: Large ribosomal subunit protein uL14 (119 aa).

It belongs to the universal ribosomal protein uL14 family. As to quaternary structure, part of the 50S ribosomal subunit. Forms a cluster with proteins L3 and L19. In the 70S ribosome, L14 and L19 interact and together make contacts with the 16S rRNA in bridges B5 and B8.

Binds to 23S rRNA. Forms part of two intersubunit bridges in the 70S ribosome. The sequence is that of Large ribosomal subunit protein uL14 from Anaplasma marginale (strain St. Maries).